The chain runs to 26 residues: Oxyopinin-3b (26 aa).

As to expression, expressed by the venom gland.

The protein resides in the secreted. Its function is as follows. May have cytolytic and antimicrobial activity. The chain is Oxyopinin-3b from Oxyopes takobius (Lynx spider).